Consider the following 87-residue polypeptide: Serine rich endogenous peptide 17 (87 aa).

Positions M1–A28 are cleaved as a signal peptide. Positions K32–A87 are disordered. Residues G40–S49 are compositionally biased toward basic and acidic residues. Residues E51–K71 carry the SCOOP motif motif. Residues A58–P69 are compositionally biased toward basic residues. A SxS motif essential for MIK2 binding motif is present at residues S63 to S65. The span at K77–A87 shows a compositional bias: pro residues.

The protein belongs to the serine rich endogenous peptide (SCOOP) phytocytokine family. In terms of assembly, interacts with MIK2 (via extracellular leucine-rich repeat domain); this interaction triggers the formation of complex between MIK2 and the BAK1/SERK3 and SERK4 coreceptors, and subsequent BAK1 activation by phosphorylation.

Its subcellular location is the cell membrane. The protein localises to the secreted. It localises to the extracellular space. It is found in the apoplast. Brassicaceae-specific phytocytokine (plant endogenous peptide released into the apoplast) perceived by MIK2 in a BAK1/SERK3 and SERK4 coreceptors-dependent manner, that modulates various physiological and antimicrobial processes including growth prevention and reactive oxygen species (ROS) response regulation. This is Serine rich endogenous peptide 17 from Arabidopsis thaliana (Mouse-ear cress).